Reading from the N-terminus, the 102-residue chain is Nucleoid-associated protein BCc_301 (102 aa).

Belongs to the YbaB/EbfC family. As to quaternary structure, homodimer.

It is found in the cytoplasm. It localises to the nucleoid. Its function is as follows. Binds to DNA and alters its conformation. May be involved in regulation of gene expression, nucleoid organization and DNA protection. The sequence is that of Nucleoid-associated protein BCc_301 from Buchnera aphidicola subsp. Cinara cedri (strain Cc).